The chain runs to 98 residues: Feather beta keratin (98 aa).

An N-acetylserine modification is found at Ser-2.

This sequence belongs to the avian keratin family. The avian keratins (F-ker, S-ker, C-ker and B-ker) are a complex mixture of very similar polypeptides.

This chain is Feather beta keratin, found in Cathartes aura (Turkey vulture).